Here is a 344-residue protein sequence, read N- to C-terminus: S-methyl-5'-thioadenosine phosphorylase (344 aa).

Residues Thr-51, 99 to 100 (RH), and 132 to 133 (SA) contribute to the phosphate site. Substrate is bound at residue Met-234. Ser-235 is a phosphate binding site. 258–260 (DYD) is a substrate binding site.

The protein belongs to the PNP/MTAP phosphorylase family. MTAP subfamily. In terms of assembly, homotrimer.

The protein localises to the cytoplasm. Its subcellular location is the nucleus. The catalysed reaction is S-methyl-5'-thioadenosine + phosphate = 5-(methylsulfanyl)-alpha-D-ribose 1-phosphate + adenine. It functions in the pathway amino-acid biosynthesis; L-methionine biosynthesis via salvage pathway; S-methyl-5-thio-alpha-D-ribose 1-phosphate from S-methyl-5'-thioadenosine (phosphorylase route): step 1/1. In terms of biological role, catalyzes the reversible phosphorylation of S-methyl-5'-thioadenosine (MTA) to adenine and 5-methylthioribose-1-phosphate. Involved in the breakdown of MTA, a major by-product of polyamine biosynthesis. Responsible for the first step in the methionine salvage pathway after MTA has been generated from S-adenosylmethionine. Has broad substrate specificity with 6-aminopurine nucleosides as preferred substrates. In Phaeosphaeria nodorum (strain SN15 / ATCC MYA-4574 / FGSC 10173) (Glume blotch fungus), this protein is S-methyl-5'-thioadenosine phosphorylase.